Here is a 945-residue protein sequence, read N- to C-terminus: UvrABC system protein A (945 aa).

31–38 contributes to the ATP binding site; it reads GLSGSGKS. The C4-type zinc finger occupies 254–281; sequence CPVCGHSISELEPKLFSFNNPAGACPTC. 2 consecutive ABC transporter domains span residues 310–587 and 607–937; these read WDRR…PDSL and RDKK…HFLK. 640 to 647 contacts ATP; it reads GVSGSGKS. A C4-type zinc finger spans residues 740 to 766; the sequence is CEACQGDGVIKVEMHFLPDIYVPCDVC.

The protein belongs to the ABC transporter superfamily. UvrA family. In terms of assembly, forms a heterotetramer with UvrB during the search for lesions.

It localises to the cytoplasm. Its function is as follows. The UvrABC repair system catalyzes the recognition and processing of DNA lesions. UvrA is an ATPase and a DNA-binding protein. A damage recognition complex composed of 2 UvrA and 2 UvrB subunits scans DNA for abnormalities. When the presence of a lesion has been verified by UvrB, the UvrA molecules dissociate. This is UvrABC system protein A from Pseudomonas aeruginosa (strain ATCC 15692 / DSM 22644 / CIP 104116 / JCM 14847 / LMG 12228 / 1C / PRS 101 / PAO1).